We begin with the raw amino-acid sequence, 242 residues long: MSSPAEYYNSLPPISKAYGTLCFFATVLCQLQILNPPFLALYYPFVFKKFQIWRLFTSFFFLGKFSINFGIRLLMIARYGVQLEKGAFEKRTADFLWMMIFGAISLLALSAIPFLDIYFLGVPMVSMLLYVWSREYPNSQISMYGLVQLRSFYLPWAMLGLDVIFGSEILPGLLGILVGHTYYFLSVLHPLATGKNYLKTPMWVHKIVARFRIGVQANAPVRPAAANTGSGAFRGRSYRLSQ.

Topologically, residues 1–20 (MSSPAEYYNSLPPISKAYGT) are cytoplasmic. The chain crosses the membrane as a helical span at residues 21–41 (LCFFATVLCQLQILNPPFLAL). At 42–55 (YYPFVFKKFQIWRL) the chain is on the lumenal side. Residues 56-76 (FTSFFFLGKFSINFGIRLLMI) traverse the membrane as a helical segment. The Cytoplasmic portion of the chain corresponds to 77–94 (ARYGVQLEKGAFEKRTAD). The chain crosses the membrane as a helical span at residues 95–115 (FLWMMIFGAISLLALSAIPFL). Residues 116 to 157 (DIYFLGVPMVSMLLYVWSREYPNSQISMYGLVQLRSFYLPWA) lie on the Lumenal side of the membrane. A helical membrane pass occupies residues 158–178 (MLGLDVIFGSEILPGLLGILV). The Cytoplasmic segment spans residues 179–242 (GHTYYFLSVL…FRGRSYRLSQ (64 aa)).

Belongs to the derlin family. In terms of tissue distribution, seedling shoots and roots.

It localises to the endoplasmic reticulum membrane. Its function is as follows. May be involved in the degradation process of specific misfolded endoplasmic reticulum (ER) luminal proteins. The sequence is that of Derlin-1 (DER1) from Oryza sativa subsp. japonica (Rice).